Consider the following 375-residue polypeptide: Protein RecA (375 aa).

Residue 75-82 (GPESSGKT) coordinates ATP. The disordered stretch occupies residues 339–375 (GPYAKMKDEQTEEAAGDQMDEDKPIDLSPNFDDDDAN). The span at 348–358 (QTEEAAGDQMD) shows a compositional bias: acidic residues.

Belongs to the RecA family.

It is found in the cytoplasm. Functionally, can catalyze the hydrolysis of ATP in the presence of single-stranded DNA, the ATP-dependent uptake of single-stranded DNA by duplex DNA, and the ATP-dependent hybridization of homologous single-stranded DNAs. It interacts with LexA causing its activation and leading to its autocatalytic cleavage. This is Protein RecA from Corynebacterium jeikeium (strain K411).